A 251-amino-acid polypeptide reads, in one-letter code: Protein DEEPER ROOTING 1 (251 aa).

Residues 46–52 (SLLAIGT) carry the IGT motif motif. Positions 64-105 (VENSSDNVQSVQDTVKFTEEEVDKIRKEFETLLAIKDQAEAQ) form a coiled coil.

This sequence belongs to the LAZY family.

In terms of biological role, involved in the control of root growth angle. Involved in cell elongation in the root tip that causes asymmetric root growth and downward bending of the root in response to gravity. The chain is Protein DEEPER ROOTING 1 from Oryza sativa subsp. japonica (Rice).